The chain runs to 175 residues: Peptide deformylase (175 aa).

Residues Cys-98 and His-140 each contribute to the Fe cation site. Glu-141 is an active-site residue. His-144 provides a ligand contact to Fe cation.

This sequence belongs to the polypeptide deformylase family. Fe(2+) serves as cofactor.

It catalyses the reaction N-terminal N-formyl-L-methionyl-[peptide] + H2O = N-terminal L-methionyl-[peptide] + formate. Its function is as follows. Removes the formyl group from the N-terminal Met of newly synthesized proteins. Requires at least a dipeptide for an efficient rate of reaction. N-terminal L-methionine is a prerequisite for activity but the enzyme has broad specificity at other positions. This chain is Peptide deformylase, found in Bradyrhizobium sp. (strain BTAi1 / ATCC BAA-1182).